Here is a 91-residue protein sequence, read N- to C-terminus: Small ribosomal subunit protein uS15c (91 aa).

Belongs to the universal ribosomal protein uS15 family. In terms of assembly, part of the 30S ribosomal subunit.

The protein localises to the plastid. The protein resides in the chloroplast. The chain is Small ribosomal subunit protein uS15c (rps15) from Cicer arietinum (Chickpea).